The sequence spans 207 residues: Basic helix-loop-helix transcription factor scleraxis (207 aa).

Disordered stretches follow at residues 1 to 91 (MSFA…RDRT) and 151 to 183 (AFFH…QPKQ). Residues 73-91 (PGREPRQRHTANARERDRT) are compositionally biased toward basic and acidic residues. The bHLH domain maps to 78 to 130 (RQRHTANARERDRTNSVNTAFTALRTLIPTEPADRKLSKIETLRLASSYISHL). Pro residues predominate over residues 161 to 171 (PLPPPPPPPPL).

As to quaternary structure, efficient DNA binding requires dimerization with another bHLH protein. Dimerizes and binds the E-box consensus sequence with E12. Expressed in mesenchymal precursors of cartilage and in connective tissue. Highly expressed in tendons in the limb, tongue and diaphragm and in cartilage of the bronchi.

The protein localises to the nucleus. Functionally, plays an early essential role in mesoderm formation, as well as a later role in formation of somite-derived chondrogenic lineages. In Mus musculus (Mouse), this protein is Basic helix-loop-helix transcription factor scleraxis (Scx).